A 190-amino-acid polypeptide reads, in one-letter code: Crossover junction endodeoxyribonuclease RuvC (190 aa).

Active-site residues include aspartate 8, glutamate 67, and aspartate 139. Mg(2+) is bound by residues aspartate 8, glutamate 67, and aspartate 139.

This sequence belongs to the RuvC family. Homodimer which binds Holliday junction (HJ) DNA. The HJ becomes 2-fold symmetrical on binding to RuvC with unstacked arms; it has a different conformation from HJ DNA in complex with RuvA. In the full resolvosome a probable DNA-RuvA(4)-RuvB(12)-RuvC(2) complex forms which resolves the HJ. The cofactor is Mg(2+).

Its subcellular location is the cytoplasm. The enzyme catalyses Endonucleolytic cleavage at a junction such as a reciprocal single-stranded crossover between two homologous DNA duplexes (Holliday junction).. The RuvA-RuvB-RuvC complex processes Holliday junction (HJ) DNA during genetic recombination and DNA repair. Endonuclease that resolves HJ intermediates. Cleaves cruciform DNA by making single-stranded nicks across the HJ at symmetrical positions within the homologous arms, yielding a 5'-phosphate and a 3'-hydroxyl group; requires a central core of homology in the junction. The consensus cleavage sequence is 5'-(A/T)TT(C/G)-3'. Cleavage occurs on the 3'-side of the TT dinucleotide at the point of strand exchange. HJ branch migration catalyzed by RuvA-RuvB allows RuvC to scan DNA until it finds its consensus sequence, where it cleaves and resolves the cruciform DNA. In Haemophilus influenzae (strain 86-028NP), this protein is Crossover junction endodeoxyribonuclease RuvC.